Consider the following 738-residue polypeptide: Polyribonucleotide nucleotidyltransferase (738 aa).

Asp487 and Asp493 together coordinate Mg(2+). The KH domain occupies 554–613; that stretch reads PKIVTMTINPDKIRDVIGPGGKMINSIIDQTGVKIDIEQDGTVFIASTDQEGIDLAMSMI. The S1 motif domain maps to 623-691; the sequence is GEVYDATVRR…DKGRVNASRK (69 aa). Residues 704-738 are disordered; that stretch reads EAYEAKRKAARESRPPRDSRPPRRDGDRRPPRSTN.

This sequence belongs to the polyribonucleotide nucleotidyltransferase family. Mg(2+) serves as cofactor.

The protein resides in the cytoplasm. It catalyses the reaction RNA(n+1) + phosphate = RNA(n) + a ribonucleoside 5'-diphosphate. Its function is as follows. Involved in mRNA degradation. Catalyzes the phosphorolysis of single-stranded polyribonucleotides processively in the 3'- to 5'-direction. In Exiguobacterium sp. (strain ATCC BAA-1283 / AT1b), this protein is Polyribonucleotide nucleotidyltransferase.